A 129-amino-acid polypeptide reads, in one-letter code: Thioredoxin-like 3-3 (129 aa).

Residues 1–10 (MEEGEAKKTG) show a composition bias toward basic and acidic residues. The tract at residues 1–30 (MEEGEAKKTGLEGTGLSLPGSSHGNLRSAG) is disordered. The Thioredoxin domain occupies 7 to 129 (KKTGLEGTGL…RLHDRLWLHS (123 aa)). A compositionally biased stretch (polar residues) spans 19-30 (PGSSHGNLRSAG). Active-site nucleophile residues include cysteine 58 and cysteine 61. Cysteine 58 and cysteine 61 are joined by a disulfide.

Belongs to the thioredoxin family.

Probable thiol-disulfide oxidoreductase that may participate in various redox reactions. This Oryza sativa subsp. japonica (Rice) protein is Thioredoxin-like 3-3.